Reading from the N-terminus, the 395-residue chain is Acetate kinase (395 aa).

A Mg(2+)-binding site is contributed by asparagine 8. Lysine 15 is an ATP binding site. Substrate is bound at residue arginine 89. Aspartate 146 acts as the Proton donor/acceptor in catalysis. ATP-binding positions include 206 to 210, 281 to 283, and 329 to 333; these read HLGNG, DLR, and GIGEN. Glutamate 382 serves as a coordination point for Mg(2+).

The protein belongs to the acetokinase family. Homodimer. It depends on Mg(2+) as a cofactor. Mn(2+) is required as a cofactor.

The protein resides in the cytoplasm. It carries out the reaction acetate + ATP = acetyl phosphate + ADP. The protein operates within metabolic intermediate biosynthesis; acetyl-CoA biosynthesis; acetyl-CoA from acetate: step 1/2. Its activity is regulated as follows. Induced by glucose excess, the induction may be mediated by CcpA transcriptional regulator. In terms of biological role, catalyzes the formation of acetyl phosphate from acetate and ATP. Can also catalyze the reverse reaction. Appears to favor the formation of acetate. Involved in the secretion of excess carbohydrate. The protein is Acetate kinase of Bacillus subtilis (strain 168).